Reading from the N-terminus, the 373-residue chain is Filamin-binding LIM protein 1 (373 aa).

The tract at residues 1–70 (MASKPEKRVA…SPWTTPGRAA (70 aa)) is filamin-binding. 2 disordered regions span residues 41–119 (RPWE…PSEE) and 135–176 (QLHL…PVEK). The segment covering 104–114 (LPPPPPPPPVL) has biased composition (pro residues). 3 consecutive LIM zinc-binding domains span residues 181–242 (DICA…TLER), 243–300 (CGKC…RKFA), and 301–370 (PVCS…RSAA). Positions 276–373 (IGDESFALGS…HVKRSAAGCC (98 aa)) are FERMT2-binding.

As to quaternary structure, interacts with NKX2-5. Isoform 1 and isoform 3 interact with FERMT2, FLNA, FLNB and FLNC. Isoform 2 interacts with FLNB. In terms of tissue distribution, isoform 1 and isoform 3 are expressed in heart, kidney, lung, pancreas, placenta and platelets. Isoform 2 is expressed in brain, heart, kidney, lung, pancreas, placenta, skeletal muscle and platelets.

It is found in the cell junction. It localises to the focal adhesion. Its subcellular location is the cytoplasm. The protein localises to the cytoskeleton. The protein resides in the stress fiber. Serves as an anchoring site for cell-ECM adhesion proteins and filamin-containing actin filaments. Is implicated in cell shape modulation (spreading) and motility. May participate in the regulation of filamin-mediated cross-linking and stabilization of actin filaments. May also regulate the assembly of filamin-containing signaling complexes that control actin assembly. Promotes dissociation of FLNA from ITGB3 and ITGB7. Promotes activation of integrins and regulates integrin-mediated cell-cell adhesion. The polypeptide is Filamin-binding LIM protein 1 (FBLIM1) (Homo sapiens (Human)).